We begin with the raw amino-acid sequence, 612 residues long: MALPAFAARALGPPLQPEQGAPARTTCPRRHSRVEAELAASRPGSVAASVRAGPPRGVSLGFNSPPLQDKPPKAFSSLAGALRAPLFALLPRGRRRRMHDLRRRWDLGSLCRALLTRGLAAVGHSLKHVLSAIFSKIFGPLASVGNMDEKSNKLLLALVMLFLFAVIVLQYVCPGTECQLLRLQAFSSPVPDPYRSEDESSARFVPRYNFSRGDLLRKVDFDIKGDDLIVFLHIQKTGGTTFGRHLVRNIQLEQPCECRVGQKKCTCHRPGKRETWLFSRFSTGWSCGLHADWTELTSCVPAVVDGKRDARLRPSRNFHYITILRDPVSRYLSEWRHVQRGATWKASLHVCDGRPPTSEELPSCYTGDDWSGCPLKEFMDCPYNLANNRQVRMLSDLTLVGCYNLSVMPEKQRNKVLLESAKSNLKHMAFFGLTEFQRKTQYLFEKTFNMNFISPFTQYNTTRASSVEINEEIQKRIEGLNFLDMELYSYAKDLFLQRYQFMRQKEHQDARRKRQEQRKFLKGRFLQTHFQSQSQGQSQSQSPGQNLSQNPNPNPNQNLTQNLSHNLTPSSNPNSTQRENRGSQKQGSGQGQGDSGTSNGTNDYIGSVETWR.

Over 1 to 4 (MALP) the chain is Cytoplasmic. Residues 5-27 (AFAARALGPPLQPEQGAPARTTC) form a helical; Signal-anchor for type II membrane protein membrane-spanning segment. The segment at 9–52 (RALGPPLQPEQGAPARTTCPRRHSRVEAELAASRPGSVAASVRA) is disordered. Residues 28–612 (PRRHSRVEAE…DYIGSVETWR (585 aa)) lie on the Lumenal side of the membrane. Residue N209 is glycosylated (N-linked (GlcNAc...) asparagine). 233–241 (HIQKTGGTT) provides a ligand contact to 3'-phosphoadenylyl sulfate. Substrate is bound by residues 263-264 (KK), R280, W285, and H290. The active-site Proton acceptor is H290. 3'-phosphoadenylyl sulfate-binding residues include R325 and S333. Residues H337 and W344 each coordinate substrate. N-linked (GlcNAc...) asparagine glycosylation is present at N404. 457–459 (TQY) is a binding site for 3'-phosphoadenylyl sulfate. An N-linked (GlcNAc...) asparagine glycan is attached at N460. 463 to 464 (RA) lines the 3'-phosphoadenylyl sulfate pocket. The segment at 529-612 (HFQSQSQGQS…DYIGSVETWR (84 aa)) is disordered. Positions 531–564 (QSQSQGQSQSQSPGQNLSQNPNPNPNQNLTQNLS) are enriched in low complexity. 5 N-linked (GlcNAc...) asparagine glycosylation sites follow: N546, N558, N562, N574, and N599. Over residues 565–577 (HNLTPSSNPNSTQ) the composition is skewed to polar residues.

This sequence belongs to the sulfotransferase 6 family.

Its subcellular location is the membrane. It carries out the reaction alpha-D-glucosaminyl-[heparan sulfate](n) + 3'-phosphoadenylyl sulfate = 6-sulfo-alpha-D-glucosaminyl-[heparan sulfate](n) + adenosine 3',5'-bisphosphate + H(+). In terms of biological role, 6-O-sulfation enzyme which catalyzes the transfer of sulfate from 3'-phosphoadenosine 5'-phosphosulfate (PAPS) to position 6 of the N-sulfoglucosamine residue (GlcNS) of heparan sulfate. The sequence is that of Heparan-sulfate 6-O-sulfotransferase 2 (Hs6st2) from Mus musculus (Mouse).